A 283-amino-acid chain; its full sequence is MAEITASLVKELRERTGAGMMECKKALVEANGDIELAIENMRKSGAIKAAKKAGNVAADGVIKTKIEGNYGVILEVNCQTDFVAKDGGFQAFADKVLDAAFAGKITDVEALKAQFEEERVALVAKIGENINIRRIASLEGDVLASYLHGARIGVLVAAKNADEELVKQLAMHVAASKPEFVKPEDVSADVVEKEYQVQLDIAMQSGKPKEIAEKMVEGRMKKFTGEVSLTGQPFVMDPSKTVAQLLKEHNADVTNFIRFEVGEGIQKVETDFAAEVAAMSRQS.

The segment at 80-83 (TDFV) is involved in Mg(2+) ion dislocation from EF-Tu.

Belongs to the EF-Ts family.

It is found in the cytoplasm. Functionally, associates with the EF-Tu.GDP complex and induces the exchange of GDP to GTP. It remains bound to the aminoacyl-tRNA.EF-Tu.GTP complex up to the GTP hydrolysis stage on the ribosome. This Cronobacter sakazakii (strain ATCC BAA-894) (Enterobacter sakazakii) protein is Elongation factor Ts.